A 286-amino-acid chain; its full sequence is UDP-3-O-acyl-N-acetylglucosamine deacetylase (286 aa).

Zn(2+) is bound by residues H79, H237, and D241. H264 acts as the Proton donor in catalysis.

Belongs to the LpxC family. The cofactor is Zn(2+).

The catalysed reaction is a UDP-3-O-[(3R)-3-hydroxyacyl]-N-acetyl-alpha-D-glucosamine + H2O = a UDP-3-O-[(3R)-3-hydroxyacyl]-alpha-D-glucosamine + acetate. It functions in the pathway glycolipid biosynthesis; lipid IV(A) biosynthesis; lipid IV(A) from (3R)-3-hydroxytetradecanoyl-[acyl-carrier-protein] and UDP-N-acetyl-alpha-D-glucosamine: step 2/6. In terms of biological role, catalyzes the hydrolysis of UDP-3-O-myristoyl-N-acetylglucosamine to form UDP-3-O-myristoylglucosamine and acetate, the committed step in lipid A biosynthesis. This is UDP-3-O-acyl-N-acetylglucosamine deacetylase from Brucella abortus (strain 2308).